Here is a 267-residue protein sequence, read N- to C-terminus: Apolipoprotein A-I (267 aa).

The first 18 residues, 1 to 18, serve as a signal peptide directing secretion; it reads MKAAVLTLAVLFLTGSQA. Tandem repeats lie at residues 68–89 and 90–111. Positions 68 to 267 are 10 X approximate tandem repeats; the sequence is LKLLDNWDSV…EEYTKKLNTQ (200 aa). Methionine sulfoxide is present on Met-110. A 3; half-length repeat occupies 112 to 122; that stretch reads KDLEEVKAKVQ. 5 tandem repeats follow at residues 123–144, 145–166, 167–188, 189–210, and 211–232. Position 136 is a methionine sulfoxide (Met-136). One copy of the 9; half-length repeat lies at 233–243; sequence PALEDLRQGLL. Residues 244 to 267 form repeat 10; sequence PVLESFKVSFLSALEEYTKKLNTQ.

Belongs to the apolipoprotein A1/A4/E family. Homodimer. Interacts with APOA1BP and CLU. Component of a sperm activating protein complex (SPAP), consisting of APOA1, an immunoglobulin heavy chain, an immunoglobulin light chain and albumin. Interacts with NDRG1. Interacts with SCGB3A2. Interacts with NAXE and YJEFN3. In terms of processing, glycosylated. Post-translationally, palmitoylated. Phosphorylation sites are present in the extracellular medium. As to expression, major protein of plasma HDL, also found in chylomicrons.

It is found in the secreted. Functionally, participates in the reverse transport of cholesterol from tissues to the liver for excretion by promoting cholesterol efflux from tissues and by acting as a cofactor for the lecithin cholesterol acyltransferase (LCAT). As part of the SPAP complex, activates spermatozoa motility. The chain is Apolipoprotein A-I (APOA1) from Pan paniscus (Pygmy chimpanzee).